The primary structure comprises 126 residues: Fluoride-specific ion channel FluC (126 aa).

Transmembrane regions (helical) follow at residues 7–27 (LWLA…VLLL), 36–56 (FPAA…LTLA), 74–94 (GVLG…GLLL), and 98–118 (GGLA…AAVA). Residues Gly-77 and Thr-80 each coordinate Na(+).

Belongs to the fluoride channel Fluc/FEX (TC 1.A.43) family.

It is found in the cell membrane. The enzyme catalyses fluoride(in) = fluoride(out). Its activity is regulated as follows. Na(+) is not transported, but it plays an essential structural role and its presence is essential for fluoride channel function. Functionally, fluoride-specific ion channel. Important for reducing fluoride concentration in the cell, thus reducing its toxicity. The protein is Fluoride-specific ion channel FluC of Deinococcus radiodurans (strain ATCC 13939 / DSM 20539 / JCM 16871 / CCUG 27074 / LMG 4051 / NBRC 15346 / NCIMB 9279 / VKM B-1422 / R1).